A 296-amino-acid chain; its full sequence is Light-independent protochlorophyllide reductase iron-sulfur ATP-binding protein (296 aa).

ATP-binding positions include 39–44 (GIGKST) and Lys68. Ser43 is a binding site for Mg(2+). Positions 124 and 158 each coordinate [4Fe-4S] cluster. ATP is bound at residue 209–210 (NR).

The protein belongs to the NifH/BchL/ChlL family. Homodimer. Protochlorophyllide reductase is composed of three subunits; ChlL, ChlN and ChlB. It depends on [4Fe-4S] cluster as a cofactor.

It carries out the reaction chlorophyllide a + oxidized 2[4Fe-4S]-[ferredoxin] + 2 ADP + 2 phosphate = protochlorophyllide a + reduced 2[4Fe-4S]-[ferredoxin] + 2 ATP + 2 H2O. The protein operates within porphyrin-containing compound metabolism; chlorophyll biosynthesis (light-independent). Component of the dark-operative protochlorophyllide reductase (DPOR) that uses Mg-ATP and reduced ferredoxin to reduce ring D of protochlorophyllide (Pchlide) to form chlorophyllide a (Chlide). This reaction is light-independent. The L component serves as a unique electron donor to the NB-component of the complex, and binds Mg-ATP. The sequence is that of Light-independent protochlorophyllide reductase iron-sulfur ATP-binding protein from Prochlorococcus marinus (strain MIT 9303).